We begin with the raw amino-acid sequence, 118 residues long: NADH-quinone oxidoreductase subunit A 1 (118 aa).

3 helical membrane-spanning segments follow: residues 1–21 (MLGV…FGLA), 60–80 (FYII…MYPW), and 87–107 (LGIF…VGYI).

Belongs to the complex I subunit 3 family. NDH-1 is composed of 14 different subunits. Subunits NuoA, H, J, K, L, M, N constitute the membrane sector of the complex.

The protein resides in the cell inner membrane. The enzyme catalyses a quinone + NADH + 5 H(+)(in) = a quinol + NAD(+) + 4 H(+)(out). Functionally, NDH-1 shuttles electrons from NADH, via FMN and iron-sulfur (Fe-S) centers, to quinones in the respiratory chain. The immediate electron acceptor for the enzyme in this species is believed to be ubiquinone. Couples the redox reaction to proton translocation (for every two electrons transferred, four hydrogen ions are translocated across the cytoplasmic membrane), and thus conserves the redox energy in a proton gradient. The sequence is that of NADH-quinone oxidoreductase subunit A 1 from Geobacter sulfurreducens (strain ATCC 51573 / DSM 12127 / PCA).